Here is a 533-residue protein sequence, read N- to C-terminus: Putative sel1-like repeat-containing protein L21 (533 aa).

5 Sel1-like repeats span residues 105–140 (VLSQ…NQGL), 141–172 (SFAQ…QSGY), 173–206 (YLSN…NQGC), 207–242 (NISQ…KQGN), and 243–278 (YFSQ…NCGH).

The protein is Putative sel1-like repeat-containing protein L21 of Acanthamoeba polyphaga mimivirus (APMV).